A 199-amino-acid chain; its full sequence is Recombination protein RecR (199 aa).

The C4-type zinc finger occupies 57–72; the sequence is CRQCRTLTEDELCPQC. Positions 80–174 constitute a Toprim domain; it reads SLLCVVQSPV…TISRIAHGVP (95 aa).

This sequence belongs to the RecR family.

May play a role in DNA repair. It seems to be involved in an RecBC-independent recombinational process of DNA repair. It may act with RecF and RecO. The protein is Recombination protein RecR of Stutzerimonas stutzeri (strain A1501) (Pseudomonas stutzeri).